A 1114-amino-acid polypeptide reads, in one-letter code: Translation initiation factor IF-2 (1114 aa).

Disordered regions lie at residues 69–102 (SIKK…PLLI) and 181–507 (INNN…KRRA). Basic and acidic residues predominate over residues 85–96 (SKKETPLKDNSN). The span at 181-198 (INNNVKSNESSQNISSAG) shows a compositional bias: polar residues. Residues 240 to 251 (INPNKQNNKQNI) show a composition bias toward low complexity. Over residues 252-261 (AFKQTGSNRI) the composition is skewed to polar residues. Low complexity-rich tracts occupy residues 262–278 (GSPN…GLRN), 290–309 (NRQG…GLRN), and 321–337 (NRQG…NRPG). Over residues 365-375 (NSEKDNKDKNN) the composition is skewed to basic and acidic residues. A compositionally biased stretch (low complexity) spans 376-385 (NAKQNINGPN). Positions 417 to 431 (GKTDWDDSAKLEALR) are enriched in basic and acidic residues. Residues 489-505 (KQFKKKKKETTRQRQKR) are compositionally biased toward basic residues. Positions 606–778 (RRPPVITVMG…ILLVSEVEDL (173 aa)) constitute a tr-type G domain. Residues 615–622 (GHVDHGKT) form a G1 region. 615–622 (GHVDHGKT) provides a ligand contact to GTP. The segment at 640 to 644 (GITQH) is G2. Residues 665–668 (DTPG) are G3. GTP is bound by residues 665–669 (DTPGH) and 719–722 (NKID). The tract at residues 719-722 (NKID) is G4. The tract at residues 755 to 757 (SAI) is G5.

It belongs to the TRAFAC class translation factor GTPase superfamily. Classic translation factor GTPase family. IF-2 subfamily.

Its subcellular location is the cytoplasm. One of the essential components for the initiation of protein synthesis. Protects formylmethionyl-tRNA from spontaneous hydrolysis and promotes its binding to the 30S ribosomal subunits. Also involved in the hydrolysis of GTP during the formation of the 70S ribosomal complex. In Prochlorococcus marinus (strain MIT 9301), this protein is Translation initiation factor IF-2.